The following is a 152-amino-acid chain: UPF0178 protein YE1167 (152 aa).

Belongs to the UPF0178 family.

This chain is UPF0178 protein YE1167, found in Yersinia enterocolitica serotype O:8 / biotype 1B (strain NCTC 13174 / 8081).